The following is a 262-amino-acid chain: MVLIRVLANLLILQLSYAQKSSELVIGGDECNIDEHRFLVALYHSRSKTFLCGGTLLNEEWVLTAAHCNRVFMYIRLGMHNKNVKFDDEQIRYAKEKYFFRCHNNFTRWDKDIMLIRLNKPVSYSEHIAPLSLPFSPPSVGSVCRAMGWGQTTSPQETLPDVPHCANINLLDYEVCRTAHPQFRLPATSRTLCAGVLEGGIDTCNRDSGGPLICNGQFQGIVFWGPDPCAQPDKPGLYTKVFDHLDWIQSIIAGEKTVNCPP.

The N-terminal stretch at 1-18 is a signal peptide; it reads MVLIRVLANLLILQLSYA. Residues 19-24 constitute a propeptide that is removed on maturation; it reads QKSSEL. The region spanning 25–253 is the Peptidase S1 domain; the sequence is VIGGDECNID…HLDWIQSIIA (229 aa). Disulfide bonds link cysteine 31–cysteine 165, cysteine 52–cysteine 68, cysteine 144–cysteine 214, cysteine 176–cysteine 193, and cysteine 204–cysteine 229. Histidine 67 serves as the catalytic Charge relay system. N-linked (GlcNAc...) asparagine glycosylation is present at asparagine 105. Catalysis depends on aspartate 112, which acts as the Charge relay system. Residue serine 208 is the Charge relay system of the active site.

This sequence belongs to the peptidase S1 family. Snake venom subfamily. Monomer. In terms of tissue distribution, expressed by the venom gland.

It is found in the secreted. Its function is as follows. Snake venom serine protease that may act in the hemostasis system of the prey. The polypeptide is Snake venom serine proteinase 9 (Crotalus adamanteus (Eastern diamondback rattlesnake)).